Consider the following 147-residue polypeptide: uncharacterized protein (147 aa).

Belongs to the RTX toxin acyltransferase family.

This is an uncharacterized protein from Synechocystis sp. (strain ATCC 27184 / PCC 6803 / Kazusa).